Reading from the N-terminus, the 230-residue chain is MAIGKRLKKAREGIDREKLYPIAEAIKLIKDRATSKFDETIEIAMNLGVDPRHADQMVRGVVTLPNGTGRTLRVGVFARGAKAEEAKAAGADVVGAEDLVETVQGGTIAFDRCIATPDMMPLVGRLGKVLGPRGMMPNPKIGTVTMDVAGAVKGAKGGSVEFRVEKAGIVQAGIGKASFSEEKLVENVKALADAVAKAKPAGAKGTYIQRIAVSSSMGPGVKVEPGTVLG.

It belongs to the universal ribosomal protein uL1 family. As to quaternary structure, part of the 50S ribosomal subunit.

Functionally, binds directly to 23S rRNA. The L1 stalk is quite mobile in the ribosome, and is involved in E site tRNA release. Protein L1 is also a translational repressor protein, it controls the translation of the L11 operon by binding to its mRNA. The chain is Large ribosomal subunit protein uL1 from Nitrobacter hamburgensis (strain DSM 10229 / NCIMB 13809 / X14).